The chain runs to 221 residues: UPF0758 protein YicR (221 aa).

In terms of domain architecture, MPN spans 99–221; it reads ALLSPEMTRE…YVSFAERGWI (123 aa). 3 residues coordinate Zn(2+): histidine 170, histidine 172, and aspartate 183. Positions 170–183 match the JAMM motif motif; it reads HNHPSGCAEPSKAD.

This sequence belongs to the UPF0758 family. YicR subfamily.

The polypeptide is UPF0758 protein YicR (Salmonella agona (strain SL483)).